The sequence spans 337 residues: S-adenosylmethionine:tRNA ribosyltransferase-isomerase (337 aa).

It belongs to the QueA family. In terms of assembly, monomer.

The protein resides in the cytoplasm. It catalyses the reaction 7-aminomethyl-7-carbaguanosine(34) in tRNA + S-adenosyl-L-methionine = epoxyqueuosine(34) in tRNA + adenine + L-methionine + 2 H(+). It functions in the pathway tRNA modification; tRNA-queuosine biosynthesis. In terms of biological role, transfers and isomerizes the ribose moiety from AdoMet to the 7-aminomethyl group of 7-deazaguanine (preQ1-tRNA) to give epoxyqueuosine (oQ-tRNA). The protein is S-adenosylmethionine:tRNA ribosyltransferase-isomerase of Legionella pneumophila (strain Corby).